We begin with the raw amino-acid sequence, 309 residues long: Homoserine kinase (309 aa).

91 to 101 (PIGSGLGSSAC) contacts ATP.

This sequence belongs to the GHMP kinase family. Homoserine kinase subfamily.

It is found in the cytoplasm. It catalyses the reaction L-homoserine + ATP = O-phospho-L-homoserine + ADP + H(+). It participates in amino-acid biosynthesis; L-threonine biosynthesis; L-threonine from L-aspartate: step 4/5. Its function is as follows. Catalyzes the ATP-dependent phosphorylation of L-homoserine to L-homoserine phosphate. This chain is Homoserine kinase, found in Salmonella paratyphi B (strain ATCC BAA-1250 / SPB7).